Here is a 496-residue protein sequence, read N- to C-terminus: Palmitoleoyl-protein carboxylesterase NOTUM (496 aa).

Residues 1–19 form the signal peptide; that stretch reads MGRGVRVLLLLSLLHCAGG. Residues 21–46 form a disordered region; it reads EGRKTWRRRGQQPPPPPRTEAAPAAG. At Ser-81 the chain carries Phosphoserine; by FAM20C. Asn-96 carries an N-linked (GlcNAc...) asparagine glycan. Catalysis depends on charge relay system residues Ser-232, Asp-340, and His-389.

The protein belongs to the pectinacetylesterase family. Notum subfamily. Rarely expressed in adult normal tissues.

The protein localises to the secreted. It catalyses the reaction [Wnt protein]-O-(9Z)-hexadecenoyl-L-serine + H2O = [Wnt protein]-L-serine + (9Z)-hexadecenoate + H(+). Functionally, carboxylesterase that acts as a key negative regulator of the Wnt signaling pathway by specifically mediating depalmitoleoylation of WNT proteins. Serine palmitoleoylation of WNT proteins is required for efficient binding to frizzled receptors. The polypeptide is Palmitoleoyl-protein carboxylesterase NOTUM (Homo sapiens (Human)).